Here is a 502-residue protein sequence, read N- to C-terminus: N-sulphoglucosamine sulphohydrolase (502 aa).

The signal sequence occupies residues 1–20; the sequence is MSCPVPACCALLLVLGLCRA. Residues D31 and D32 each contribute to the Ca(2+) site. A glycan (N-linked (GlcNAc...) asparagine) is linked at N41. C70 lines the Ca(2+) pocket. C70 acts as the Nucleophile in catalysis. Position 70 is a 3-oxoalanine (Cys) (C70). 2 N-linked (GlcNAc...) asparagine glycosylation sites follow: N142 and N151. C183 and C194 are joined by a disulfide. The N-linked (GlcNAc...) asparagine glycan is linked to N264. Ca(2+) contacts are provided by D273 and N274. Residue N413 is glycosylated (N-linked (GlcNAc...) asparagine). C481 and C495 are joined by a disulfide.

The protein belongs to the sulfatase family. The cofactor is Ca(2+). In terms of processing, the conversion to 3-oxoalanine (also known as C-formylglycine, FGly), of a serine or cysteine residue in prokaryotes and of a cysteine residue in eukaryotes, is critical for catalytic activity.

The protein localises to the lysosome. It carries out the reaction N-sulfo-D-glucosamine + H2O = D-glucosamine + sulfate. Functionally, catalyzes a step in lysosomal heparan sulfate degradation. The protein is N-sulphoglucosamine sulphohydrolase (SGSH) of Homo sapiens (Human).